A 906-amino-acid polypeptide reads, in one-letter code: Alanine--tRNA ligase, chloroplastic/mitochondrial (906 aa).

Residues M1–L10 are compositionally biased toward basic and acidic residues. Residues M1 to N22 are disordered. Zn(2+)-binding residues include H589, H593, C691, and H695.

It belongs to the class-II aminoacyl-tRNA synthetase family. Monomer. It depends on Zn(2+) as a cofactor.

It localises to the plastid. It is found in the chloroplast. The protein localises to the mitochondrion. It carries out the reaction tRNA(Ala) + L-alanine + ATP = L-alanyl-tRNA(Ala) + AMP + diphosphate. In terms of biological role, catalyzes the attachment of alanine to tRNA(Ala) in a two-step reaction: alanine is first activated by ATP to form Ala-AMP and then transferred to the acceptor end of tRNA(Ala). Also edits incorrectly charged tRNA(Ala) via its editing domain. The chain is Alanine--tRNA ligase, chloroplastic/mitochondrial from Ostreococcus lucimarinus (strain CCE9901).